Here is a 545-residue protein sequence, read N- to C-terminus: Glucans biosynthesis protein G (545 aa).

Positions 1-34 (MVSLLRCQSFKPSSSLICSLALSAAFALSSSAFA) are cleaved as a signal peptide. A disordered region spans residues 38–60 (KPAENKPATPVVSPPKATAQPAN).

This sequence belongs to the OpgD/OpgG family.

The protein localises to the periplasm. It functions in the pathway glycan metabolism; osmoregulated periplasmic glucan (OPG) biosynthesis. Functionally, involved in the biosynthesis of osmoregulated periplasmic glucans (OPGs). This is Glucans biosynthesis protein G from Shewanella sp. (strain MR-7).